A 653-amino-acid polypeptide reads, in one-letter code: 23S rRNA 5-hydroxycytidine C2501 synthase (653 aa).

The protein belongs to the peptidase U32 family. As to quaternary structure, interacts with precursors of the 50S ribosomal subunit.

Its activity is regulated as follows. Iron-sulfur clusters and prephenate are required for ho5C2501 formation. Functionally, responsible for the formation of the 5-hydroxycytidine modification at the C2501 position (ho5C2501) of 23S rRNA. May be a Fe-S protein that catalyzes ho5C2501 formation using prephenate as a hydroxyl group donor. This Escherichia coli (strain K12) protein is 23S rRNA 5-hydroxycytidine C2501 synthase.